A 354-amino-acid polypeptide reads, in one-letter code: Guanine nucleotide-binding protein G(t) subunit alpha-3 (354 aa).

The interval 1–27 (MGSGISSESKESAKRSKELEKKLQEDA) is disordered. Glycine 2 carries N-myristoyl glycine lipidation. Over residues 8–27 (ESKESAKRSKELEKKLQEDA) the composition is skewed to basic and acidic residues. The G-alpha domain maps to 32 to 354 (RTVKLLLLGA…KENLKDCGLF (323 aa)). The interval 35–48 (KLLLLGAGESGKST) is G1 motif. Residues 40-47 (GAGESGKS), 175-181 (LHSRVKT), 200-204 (DVGGQ), 269-272 (NKKD), and alanine 326 contribute to the GTP site. The Mg(2+) site is built by serine 47 and threonine 181. The segment at 173–181 (DVLHSRVKT) is G2 motif. The segment at 196 to 205 (FRMFDVGGQR) is G3 motif. Positions 265–272 (VLFLNKKD) are G4 motif. The tract at residues 324 to 329 (TCATDT) is G5 motif.

The protein belongs to the G-alpha family. G(i/o/t/z) subfamily. In terms of assembly, g proteins are composed of 3 units; alpha, beta and gamma, respectively GNAT3, GNB1 and GNG13 for Gustducin heterotrimer for bitter taste transduction. The alpha chain contains the guanine nucleotide binding site. Component of the TAS2R14-GNAT3 complex, consisting of TAS2R14, GNAT3, GNB1 and GNG2; within the complex interacts with TAS2R14; this complex plays a role in the perception of bitterness. Gustducin heterotrimer may also be composed of GNAT3, GNB3 and GNG13. Post-translationally, potential N-myristoylation may anchor alpha-subunit to the inner surface of plasma membrane. As to expression, expressed in taste buds (sensory organs of clustered epithelial cells) of the circumvallate and foliate papillae of the tongue at protein level. Expressed in enteroendocrine L cells of the gut. Detected also in spermatozoa.

It localises to the cytoplasm. Its function is as follows. Guanine nucleotide-binding protein (G protein) alpha subunit playing a prominent role in bitter and sweet taste transduction as well as in umami (monosodium glutamate, monopotassium glutamate, and inosine monophosphate) taste transduction. Transduction by this alpha subunit involves coupling of specific cell-surface receptors with a cGMP-phosphodiesterase; Activation of phosphodiesterase lowers intracellular levels of cAMP and cGMP which may open a cyclic nucleotide-suppressible cation channel leading to influx of calcium, ultimately leading to release of neurotransmitter. Indeed, denatonium and strychnine induce transient reduction in cAMP and cGMP in taste tissue, whereas this decrease is inhibited by GNAT3 antibody. Gustducin heterotrimer transduces response to bitter and sweet compounds via regulation of phosphodiesterase for alpha subunit, as well as via activation of phospholipase C for beta and gamma subunits, with ultimate increase inositol trisphosphate and increase of intracellular Calcium. GNAT3 can functionally couple to taste receptors to transmit intracellular signal: receptor heterodimer TAS1R2/TAS1R3 senses sweetness and TAS1R1/TAS1R3 transduces umami taste, whereas the T2R family GPCRs such as TAS2R14 act as bitter sensors. Also functions as lumenal sugar sensors in the gut to control the expression of the Na+-glucose transporter SGLT1 in response to dietaty sugar, as well as the secretion of Glucagon-like peptide-1, GLP-1 and glucose-dependent insulinotropic polypeptide, GIP. Thus, may modulate the gut capacity to absorb sugars, with implications in malabsorption syndromes and diet-related disorders including diabetes and obesity. In Homo sapiens (Human), this protein is Guanine nucleotide-binding protein G(t) subunit alpha-3 (GNAT3).